Consider the following 406-residue polypeptide: Argininosuccinate synthase (406 aa).

ATP contacts are provided by residues 13-21 (AYSGGLDTS) and Ala-40. Residues Tyr-91 and Ser-96 each coordinate L-citrulline. Gly-121 serves as a coordination point for ATP. Thr-123, Asn-127, and Asp-128 together coordinate L-aspartate. An L-citrulline-binding site is contributed by Asn-127. Positions 131, 180, 189, 265, and 277 each coordinate L-citrulline.

This sequence belongs to the argininosuccinate synthase family. Type 1 subfamily. In terms of assembly, homotetramer.

Its subcellular location is the cytoplasm. The catalysed reaction is L-citrulline + L-aspartate + ATP = 2-(N(omega)-L-arginino)succinate + AMP + diphosphate + H(+). It participates in amino-acid biosynthesis; L-arginine biosynthesis; L-arginine from L-ornithine and carbamoyl phosphate: step 2/3. In Syntrophotalea carbinolica (strain DSM 2380 / NBRC 103641 / GraBd1) (Pelobacter carbinolicus), this protein is Argininosuccinate synthase.